A 181-amino-acid polypeptide reads, in one-letter code: ATP-dependent protease subunit HslV (181 aa).

Threonine 7 is an active-site residue. Residues alanine 162, cysteine 165, and threonine 168 each contribute to the Na(+) site.

The protein belongs to the peptidase T1B family. HslV subfamily. As to quaternary structure, a double ring-shaped homohexamer of HslV is capped on each side by a ring-shaped HslU homohexamer. The assembly of the HslU/HslV complex is dependent on binding of ATP.

The protein localises to the cytoplasm. It catalyses the reaction ATP-dependent cleavage of peptide bonds with broad specificity.. With respect to regulation, allosterically activated by HslU binding. Its function is as follows. Protease subunit of a proteasome-like degradation complex believed to be a general protein degrading machinery. This Coxiella burnetii (strain RSA 493 / Nine Mile phase I) protein is ATP-dependent protease subunit HslV.